We begin with the raw amino-acid sequence, 377 residues long: Capsule polysaccharide export inner-membrane protein BexC (377 aa).

The next 2 membrane-spanning stretches (helical) occupy residues 23-43 (LFGLTVLIPTAFSAVYFGLFA) and 351-371 (IIATFIIGLMLYGVLNLLIAS).

It belongs to the BexC/CtrB/KpsE family.

The protein resides in the cell inner membrane. May form an ATP-driven capsule polysaccharide export apparatus, in association with the BexA, BexB and BexD proteins. This is Capsule polysaccharide export inner-membrane protein BexC (bexC) from Haemophilus influenzae.